The primary structure comprises 147 residues: Large ribosomal subunit protein uL15 (147 aa).

A disordered region spans residues 1–58 (MKLFELKPAPGAKKRPKRVGRGESSGHGKTSTRGHKGQWARSGGGVRPGFEGGQMPLT). Positions 42–52 (SGGGVRPGFEG) are enriched in gly residues.

This sequence belongs to the universal ribosomal protein uL15 family. Part of the 50S ribosomal subunit.

Functionally, binds to the 23S rRNA. This chain is Large ribosomal subunit protein uL15, found in Caldicellulosiruptor saccharolyticus (strain ATCC 43494 / DSM 8903 / Tp8T 6331).